Here is a 147-residue protein sequence, read N- to C-terminus: Cytochrome c-type biogenesis protein CcmE 1 (147 aa).

The Cytoplasmic portion of the chain corresponds to methionine 1–arginine 9. A helical; Signal-anchor for type II membrane protein transmembrane segment spans residues isoleucine 10 to alanine 30. At methionine 31–serine 147 the chain is on the periplasmic side. Heme is bound by residues histidine 123 and tyrosine 127.

This sequence belongs to the CcmE/CycJ family.

It is found in the cell inner membrane. Functionally, heme chaperone required for the biogenesis of c-type cytochromes. Transiently binds heme delivered by CcmC and transfers the heme to apo-cytochromes in a process facilitated by CcmF and CcmH. This Ruegeria pomeroyi (strain ATCC 700808 / DSM 15171 / DSS-3) (Silicibacter pomeroyi) protein is Cytochrome c-type biogenesis protein CcmE 1.